A 179-amino-acid polypeptide reads, in one-letter code: Cytochrome c-type biogenesis protein CcmE (179 aa).

Residues Met1 to Arg8 are Cytoplasmic-facing. A helical; Signal-anchor for type II membrane protein transmembrane segment spans residues Leu9–Ala29. Over Leu30 to Lys179 the chain is Periplasmic. Residues His131 and Tyr135 each coordinate heme. 2 stretches are compositionally biased toward basic and acidic residues: residues Pro138–His148 and Glu161–Lys179. A disordered region spans residues Pro138–Lys179.

It belongs to the CcmE/CycJ family.

It is found in the cell inner membrane. In terms of biological role, heme chaperone required for the biogenesis of c-type cytochromes. Transiently binds heme delivered by CcmC and transfers the heme to apo-cytochromes in a process facilitated by CcmF and CcmH. This chain is Cytochrome c-type biogenesis protein CcmE, found in Mannheimia succiniciproducens (strain KCTC 0769BP / MBEL55E).